We begin with the raw amino-acid sequence, 407 residues long: Phosphoglycerate kinase (407 aa).

Residues 21–23 (DLN), R36, 59–62 (HQGR), R116, and R156 contribute to the substrate site. ATP is bound by residues E332 and 358–361 (GGDT).

The protein belongs to the phosphoglycerate kinase family. In terms of assembly, monomer.

The protein localises to the cytoplasm. The enzyme catalyses (2R)-3-phosphoglycerate + ATP = (2R)-3-phospho-glyceroyl phosphate + ADP. It participates in carbohydrate degradation; glycolysis; pyruvate from D-glyceraldehyde 3-phosphate: step 2/5. The sequence is that of Phosphoglycerate kinase from Halorubrum lacusprofundi (strain ATCC 49239 / DSM 5036 / JCM 8891 / ACAM 34).